The chain runs to 253 residues: Chitooligosaccharide deacetylase (253 aa).

Mg(2+)-binding residues include His-61 and His-126.

This sequence belongs to the YdjC deacetylase family. ChbG subfamily. In terms of assembly, homodimer. It depends on Mg(2+) as a cofactor.

It localises to the cytoplasm. It catalyses the reaction N,N'-diacetylchitobiose + H2O = N-acetyl-beta-D-glucosaminyl-(1-&gt;4)-D-glucosamine + acetate. It carries out the reaction diacetylchitobiose-6'-phosphate + H2O = N'-monoacetylchitobiose-6'-phosphate + acetate. It participates in glycan degradation; chitin degradation. In terms of biological role, involved in the degradation of chitin. ChbG is essential for growth on the acetylated chitooligosaccharides chitobiose and chitotriose but is dispensable for growth on cellobiose and chitosan dimer, the deacetylated form of chitobiose. Deacetylation of chitobiose-6-P and chitotriose-6-P is necessary for both the activation of the chb promoter by the regulatory protein ChbR and the hydrolysis of phosphorylated beta-glucosides by the phospho-beta-glucosidase ChbF. Catalyzes the removal of only one acetyl group from chitobiose-6-P to yield monoacetylchitobiose-6-P, the inducer of ChbR and the substrate of ChbF. The sequence is that of Chitooligosaccharide deacetylase from Yersinia pestis bv. Antiqua (strain Angola).